Here is a 161-residue protein sequence, read N- to C-terminus: Small ribosomal subunit protein uS9 (161 aa).

Belongs to the universal ribosomal protein uS9 family.

The sequence is that of Small ribosomal subunit protein uS9 from Rickettsia felis (strain ATCC VR-1525 / URRWXCal2) (Rickettsia azadi).